A 917-amino-acid polypeptide reads, in one-letter code: Isoleucine--tRNA ligase (917 aa).

7 residues coordinate L-isoleucyl-5'-AMP: proline 56, histidine 67, glutamate 554, glycine 555, aspartate 557, glutamine 558, and histidine 585. The 'HIGH' region motif lies at 57 to 67 (PYANGNLHMGH). Residues 595–599 (KMSKS) carry the 'KMSKS' region motif. Lysine 598 contributes to the ATP binding site. Residues arginine 632 and glutamine 640 each contribute to the tRNA(Ile) site. 4 residues coordinate Zn(2+): cysteine 886, cysteine 889, cysteine 906, and cysteine 909.

Belongs to the class-I aminoacyl-tRNA synthetase family. IleS type 1 subfamily. As to quaternary structure, monomer. The cofactor is Zn(2+).

Its subcellular location is the cytoplasm. The catalysed reaction is tRNA(Ile) + L-isoleucine + ATP = L-isoleucyl-tRNA(Ile) + AMP + diphosphate. Its function is as follows. Catalyzes the attachment of isoleucine to tRNA(Ile). As IleRS can inadvertently accommodate and process structurally similar amino acids such as valine, to avoid such errors it has two additional distinct tRNA(Ile)-dependent editing activities. One activity is designated as 'pretransfer' editing and involves the hydrolysis of activated Val-AMP. The other activity is designated 'posttransfer' editing and involves deacylation of mischarged Val-tRNA(Ile). The chain is Isoleucine--tRNA ligase (ileS) from Staphylococcus aureus.